The chain runs to 385 residues: SH3 domain-binding protein 5-like (385 aa).

The disordered stretch occupies residues 1-58; the sequence is MAELRQIPGGRETPQGELRPEVVEDEVPRSPVAEEPGGGGSNSSEAKLSPREEEELDP. A Phosphothreonine modification is found at T13. Residues 18-28 are compositionally biased toward basic and acidic residues; the sequence is LRPEVVEDEVP. A phosphoserine mark is found at S30 and S49. Coiled coils occupy residues 59-140 and 169-272; these read RIQE…YERA and WQEM…EQIH. A disordered region spans residues 272-328; sequence HARRRGQPAHTPGQRRSSPVGAEAGPDGGEDADSGIIEGAEGGGLEEGVSLGPGAAP. The span at 318-328 shows a compositional bias: low complexity; sequence EGVSLGPGAAP. Residues S343, S350, S358, and S362 each carry the phosphoserine modification. The segment at 359 to 385 is disordered; it reads DHTSLDGQELGPRSGGRGGRHQRSISL. Residues 376-385 show a composition bias toward basic residues; sequence GGRHQRSISL.

It belongs to the SH3BP5 family.

In terms of biological role, functions as a guanine nucleotide exchange factor (GEF) for RAB11A. The protein is SH3 domain-binding protein 5-like (SH3BP5L) of Bos taurus (Bovine).